The sequence spans 25 residues: Spinigerin (25 aa).

The protein resides in the secreted. Its function is as follows. Active against Gram-positive bacteria B.megaterium and M.luteus, Gram-negative bacteria E.coli SBS363 and D22, K.pneumoniae, S.typhimurium and P.aeruginosa, yeast C.albicans and filamentous fungi F.culmorum, N.crassa, N.hematococca and T.viridae. Inactive against Gram-positive bacteria B.subtilis, S.pyogenes, B.thuringiensis and S.aureus, Gram-negative bacteria E.cloacae and E.carotovora and filamentous fungus B.bassiana. The sequence is that of Spinigerin from Pseudacanthotermes spiniger.